Here is a 343-residue protein sequence, read N- to C-terminus: Glycerol-3-phosphate dehydrogenase [NAD(P)+] (343 aa).

Residues Ser11, Trp12, Arg32, and Lys106 each coordinate NADPH. Residues Lys106, Gly137, and Ser139 each coordinate sn-glycerol 3-phosphate. NADPH is bound at residue Ala141. Sn-glycerol 3-phosphate is bound by residues Lys192, Asp245, Ser255, Arg256, and Asn257. Lys192 serves as the catalytic Proton acceptor. Arg256 lines the NADPH pocket. Val280 and Glu282 together coordinate NADPH.

It belongs to the NAD-dependent glycerol-3-phosphate dehydrogenase family.

The protein localises to the cytoplasm. The catalysed reaction is sn-glycerol 3-phosphate + NAD(+) = dihydroxyacetone phosphate + NADH + H(+). It catalyses the reaction sn-glycerol 3-phosphate + NADP(+) = dihydroxyacetone phosphate + NADPH + H(+). It participates in membrane lipid metabolism; glycerophospholipid metabolism. Functionally, catalyzes the reduction of the glycolytic intermediate dihydroxyacetone phosphate (DHAP) to sn-glycerol 3-phosphate (G3P), the key precursor for phospholipid synthesis. This chain is Glycerol-3-phosphate dehydrogenase [NAD(P)+], found in Syntrophomonas wolfei subsp. wolfei (strain DSM 2245B / Goettingen).